Here is a 397-residue protein sequence, read N- to C-terminus: Protochlorophyllide reductase, chloroplastic (397 aa).

The transit peptide at 1-57 (MALTMSAKSVSARAQVSSKAQAAPAVAVSGRTSSRVMPAPALAARSSVARTPLVVCA) directs the protein to the chloroplast.

The protein belongs to the short-chain dehydrogenases/reductases (SDR) family. POR subfamily.

The protein localises to the plastid. Its subcellular location is the chloroplast. The enzyme catalyses chlorophyllide a + NADP(+) = protochlorophyllide a + NADPH + H(+). It functions in the pathway porphyrin-containing compound metabolism; chlorophyll biosynthesis. Phototransformation of protochlorophyllide (Pchlide) to chlorophyllide (Chlide). This Chlamydomonas reinhardtii (Chlamydomonas smithii) protein is Protochlorophyllide reductase, chloroplastic (PORA).